The sequence spans 293 residues: Formamidopyrimidine-DNA glycosylase (293 aa).

The active-site Schiff-base intermediate with DNA is the proline 2. Glutamate 3 (proton donor) is an active-site residue. The Proton donor; for beta-elimination activity role is filled by lysine 60. DNA-binding residues include histidine 110, arginine 129, and lysine 174. The FPG-type zinc-finger motif lies at 259–293; it reads NVYRRTGKKCHACKNLIERQKISGRSTHWCRKCQK. Arginine 283 functions as the Proton donor; for delta-elimination activity in the catalytic mechanism.

It belongs to the FPG family. As to quaternary structure, monomer. It depends on Zn(2+) as a cofactor.

The enzyme catalyses Hydrolysis of DNA containing ring-opened 7-methylguanine residues, releasing 2,6-diamino-4-hydroxy-5-(N-methyl)formamidopyrimidine.. The catalysed reaction is 2'-deoxyribonucleotide-(2'-deoxyribose 5'-phosphate)-2'-deoxyribonucleotide-DNA = a 3'-end 2'-deoxyribonucleotide-(2,3-dehydro-2,3-deoxyribose 5'-phosphate)-DNA + a 5'-end 5'-phospho-2'-deoxyribonucleoside-DNA + H(+). Functionally, involved in base excision repair of DNA damaged by oxidation or by mutagenic agents. Acts as a DNA glycosylase that recognizes and removes damaged bases. Has a preference for oxidized purines, such as 7,8-dihydro-8-oxoguanine (8-oxoG). Has AP (apurinic/apyrimidinic) lyase activity and introduces nicks in the DNA strand. Cleaves the DNA backbone by beta-delta elimination to generate a single-strand break at the site of the removed base with both 3'- and 5'-phosphates. The protein is Formamidopyrimidine-DNA glycosylase of Prochlorococcus marinus (strain MIT 9515).